We begin with the raw amino-acid sequence, 314 residues long: Olfactory receptor 1E1 (314 aa).

The Extracellular segment spans residues 1-25 (MMGQNQTSISDFLLLGLPIQPEQQN). N5 is a glycosylation site (N-linked (GlcNAc...) asparagine). Residues 26-49 (LCYALFLAMYLTTLLGNLLIIVLI) form a helical membrane-spanning segment. Topologically, residues 50–57 (RLDSHLHT) are cytoplasmic. The chain crosses the membrane as a helical span at residues 58 to 79 (PMYLFLSNLSFSDLCFSSVTIP). The Extracellular segment spans residues 80–100 (KLLQNMQNQDPSIPYADCLTQ). Residues 101-120 (MYFFLLFGDLESFLLVAMAY) form a helical membrane-spanning segment. At 121–139 (DRYVAICFPLHYTAIMSPM) the chain is on the cytoplasmic side. The chain crosses the membrane as a helical span at residues 140–158 (LCLALVALSWVLTTFHAML). The Extracellular portion of the chain corresponds to 159 to 195 (HTLLMARLCFCADNVIPHFFCDMSALLKLAFSDTRVN). The helical transmembrane segment at 196 to 219 (EWVIFIMGGLILVIPFLLILGSYA) threads the bilayer. Topologically, residues 220-236 (RIVSSILKVPSSKGICK) are cytoplasmic. Residues 237–259 (AFSTCGSHLSVVSLFYGTVIGLY) form a helical membrane-spanning segment. The Extracellular portion of the chain corresponds to 260–272 (LCSSANSSTLKDT). Residues 273 to 292 (VMAMMYTVVTPMLNPFIYSL) traverse the membrane as a helical segment. The Cytoplasmic portion of the chain corresponds to 293 to 314 (RNRDMKGALSRVIHQKKTFFSL).

Belongs to the G-protein coupled receptor 1 family.

It localises to the cell membrane. Odorant receptor. This chain is Olfactory receptor 1E1 (OR1E1), found in Homo sapiens (Human).